Here is a 578-residue protein sequence, read N- to C-terminus: Galectin-3-binding protein (578 aa).

The first 18 residues, 1 to 18, serve as a signal peptide directing secretion; it reads MAFLWLFSLWLLVPGTQG. The SRCR domain maps to 24 to 124; that stretch reads MRLVNGASAN…HEKDAGVVCS (101 aa). 3 disulfides stabilise this stretch: C49/C113, C62/C123, and C93/C103. 2 N-linked (GlcNAc...) asparagine glycosylation sites follow: N69 and N102. In terms of domain architecture, BTB spans 153-221; the sequence is CDLFIQVTGQ…FYSRRIEVTM (69 aa). A BACK domain is found at 260–360; the sequence is PLELYAYAQA…VLPQELFELQ (101 aa). N-linked (GlcNAc...) asparagine glycosylation is found at N362 and N398.

Homodimers and homomultimers. The multimers form ring-like structures with a diameter of 30-40 nm. Binds LGALS1 and LGALS3. Binds ITGB1, COL4A1, COL5A1, COL6A1, FN1 and NID. The unglycosylated form interacts with PDE4DIP; this interaction, which is PDE4DIP isoform-specific, may connect a pericentrosomal complex to the gamma-tubulin ring complex (gamma-TuRC) to promote microtubule assembly and acetylation.

It localises to the secreted. Its subcellular location is the extracellular space. It is found in the extracellular matrix. Functionally, promotes integrin-mediated cell adhesion. May stimulate host defense against viruses and tumor cells. The chain is Galectin-3-binding protein (LGALS3BP) from Mesocricetus auratus (Golden hamster).